The sequence spans 802 residues: Lon protease (802 aa).

The Lon N-terminal domain maps to 17-209; that stretch reads LPILPLNNVV…QVLSFLERER (193 aa). 363–370 serves as a coordination point for ATP; that stretch reads GPPGVGKT. A Lon proteolytic domain is found at 599 to 780; sequence EDEVGVVTGL…DEVLPRVLHP (182 aa). Residues S686 and K729 contribute to the active site.

It belongs to the peptidase S16 family. As to quaternary structure, homohexamer. Organized in a ring with a central cavity.

It localises to the cytoplasm. The catalysed reaction is Hydrolysis of proteins in presence of ATP.. ATP-dependent serine protease that mediates the selective degradation of mutant and abnormal proteins as well as certain short-lived regulatory proteins. Required for cellular homeostasis and for survival from DNA damage and developmental changes induced by stress. Degrades polypeptides processively to yield small peptide fragments that are 5 to 10 amino acids long. Binds to DNA in a double-stranded, site-specific manner. The protein is Lon protease of Roseiflexus castenholzii (strain DSM 13941 / HLO8).